A 163-amino-acid polypeptide reads, in one-letter code: UPF0523 protein B (163 aa).

It belongs to the UPF0523 family.

The polypeptide is UPF0523 protein B (Dictyostelium discoideum (Social amoeba)).